Consider the following 243-residue polypeptide: Adenosylcobinamide-GDP ribazoletransferase (243 aa).

5 consecutive transmembrane segments (helical) span residues 31–48, 61–81, 109–129, 134–154, and 188–208; these read LLFY…LWVL, AALL…DGLA, IAVV…VALI, GFAL…LFLC, and LLLG…LFFW.

This sequence belongs to the CobS family. Mg(2+) serves as cofactor.

It is found in the cell inner membrane. It catalyses the reaction alpha-ribazole + adenosylcob(III)inamide-GDP = adenosylcob(III)alamin + GMP + H(+). It carries out the reaction alpha-ribazole 5'-phosphate + adenosylcob(III)inamide-GDP = adenosylcob(III)alamin 5'-phosphate + GMP + H(+). Its pathway is cofactor biosynthesis; adenosylcobalamin biosynthesis; adenosylcobalamin from cob(II)yrinate a,c-diamide: step 7/7. In terms of biological role, joins adenosylcobinamide-GDP and alpha-ribazole to generate adenosylcobalamin (Ado-cobalamin). Also synthesizes adenosylcobalamin 5'-phosphate from adenosylcobinamide-GDP and alpha-ribazole 5'-phosphate. The chain is Adenosylcobinamide-GDP ribazoletransferase from Pseudomonas fluorescens (strain ATCC BAA-477 / NRRL B-23932 / Pf-5).